The chain runs to 239 residues: 1-(5-phosphoribosyl)-5-[(5-phosphoribosylamino)methylideneamino] imidazole-4-carboxamide isomerase (239 aa).

Residue D8 is the Proton acceptor of the active site. The active-site Proton donor is the D129.

This sequence belongs to the HisA/HisF family.

It localises to the cytoplasm. It catalyses the reaction 1-(5-phospho-beta-D-ribosyl)-5-[(5-phospho-beta-D-ribosylamino)methylideneamino]imidazole-4-carboxamide = 5-[(5-phospho-1-deoxy-D-ribulos-1-ylimino)methylamino]-1-(5-phospho-beta-D-ribosyl)imidazole-4-carboxamide. The protein operates within amino-acid biosynthesis; L-histidine biosynthesis; L-histidine from 5-phospho-alpha-D-ribose 1-diphosphate: step 4/9. In Paramagnetospirillum magneticum (strain ATCC 700264 / AMB-1) (Magnetospirillum magneticum), this protein is 1-(5-phosphoribosyl)-5-[(5-phosphoribosylamino)methylideneamino] imidazole-4-carboxamide isomerase.